Consider the following 112-residue polypeptide: UPF0060 membrane protein IL2332 (112 aa).

A run of 4 helical transmembrane segments spans residues 10–30 (LGLF…PYLW), 36–56 (SAWL…LLTL), 64–84 (VYAA…KAVE), and 90–110 (TYDA…AVGW).

Belongs to the UPF0060 family.

It is found in the cell inner membrane. The chain is UPF0060 membrane protein IL2332 from Idiomarina loihiensis (strain ATCC BAA-735 / DSM 15497 / L2-TR).